Consider the following 313-residue polypeptide: Beta-ketoacyl-[acyl-carrier-protein] synthase III (313 aa).

Residues C112 and H238 contribute to the active site. The ACP-binding stretch occupies residues 239–243 (QANIR). The active site involves N268.

This sequence belongs to the thiolase-like superfamily. FabH family. As to quaternary structure, homodimer.

It is found in the cytoplasm. It catalyses the reaction malonyl-[ACP] + acetyl-CoA + H(+) = 3-oxobutanoyl-[ACP] + CO2 + CoA. It participates in lipid metabolism; fatty acid biosynthesis. Functionally, catalyzes the condensation reaction of fatty acid synthesis by the addition to an acyl acceptor of two carbons from malonyl-ACP. Catalyzes the first condensation reaction which initiates fatty acid synthesis and may therefore play a role in governing the total rate of fatty acid production. Possesses both acetoacetyl-ACP synthase and acetyl transacylase activities. Its substrate specificity determines the biosynthesis of branched-chain and/or straight-chain of fatty acids. The protein is Beta-ketoacyl-[acyl-carrier-protein] synthase III of Staphylococcus aureus (strain COL).